Consider the following 177-residue polypeptide: FMRFamide-related peptides (177 aa).

An N-terminal signal peptide occupies residues 1 to 21 (MNHPRSIAMLAALWLVVSVTS). Positions 22–32 (TPVRRSPDLEA) are excised as a propeptide. Phe45 carries the phenylalanine amide modification. Residues 47-93 (RSTLPVVPPAQPSFLQRYSAPQPAALTADDLMTFLRAYEEDYSSPVS) constitute a propeptide that is removed on maturation. Phe102 and Phe111 each carry phenylalanine amide. The propeptide occupies 113–131 (RSVDEENSGYQAETNTYPQ). Leu143 is subject to Leucine amide. Positions 145–177 (RDNELSESNDEDRYEVESERTKRSVVDPCNDCA) are excised as a propeptide. The tract at residues 145 to 177 (RDNELSESNDEDRYEVESERTKRSVVDPCNDCA) is disordered. Residues 149–158 (LSESNDEDRY) show a composition bias toward acidic residues. Residues 159–169 (EVESERTKRSV) show a composition bias toward basic and acidic residues.

Belongs to the FARP (FMRFamide related peptide) family. In terms of tissue distribution, only expressed in the CNS and predominantly in the thoracic ganglia. Strongest expression is seen in two pairs of large neurons in each thoracic ganglion. These neurons are ventrolateral neurosecretory cells 1 and 2, they project their axons through transverse nerves into the periphery where axons from the prothoracic ganglion innervate the prothoracic gland.

The protein resides in the secreted. Regulates ecdysteroidogenesis by direct innervation of the prothoracic gland by reducing cAMP production via the receptor for myosuppressin. The neurons that innervate the prothoracic gland during the fifth instar are most active during days 0-4, after which they reduce and then peak again on day 6. Expression suppresses the biosynthesis of steroid hormones called ecdysteroids that elicit molting and metamorphosis. This chain is FMRFamide-related peptides, found in Bombyx mori (Silk moth).